A 486-amino-acid polypeptide reads, in one-letter code: Probable glycine dehydrogenase (decarboxylating) subunit 2 (486 aa).

Lys-269 is modified (N6-(pyridoxal phosphate)lysine).

It belongs to the GcvP family. C-terminal subunit subfamily. The glycine cleavage system is composed of four proteins: P, T, L and H. In this organism, the P 'protein' is a heterodimer of two subunits. The cofactor is pyridoxal 5'-phosphate.

It catalyses the reaction N(6)-[(R)-lipoyl]-L-lysyl-[glycine-cleavage complex H protein] + glycine + H(+) = N(6)-[(R)-S(8)-aminomethyldihydrolipoyl]-L-lysyl-[glycine-cleavage complex H protein] + CO2. The glycine cleavage system catalyzes the degradation of glycine. The P protein binds the alpha-amino group of glycine through its pyridoxal phosphate cofactor; CO(2) is released and the remaining methylamine moiety is then transferred to the lipoamide cofactor of the H protein. The polypeptide is Probable glycine dehydrogenase (decarboxylating) subunit 2 (Chlorobaculum tepidum (strain ATCC 49652 / DSM 12025 / NBRC 103806 / TLS) (Chlorobium tepidum)).